A 534-amino-acid chain; its full sequence is Tyrosine-protein kinase Fyn (534 aa).

A lipid anchor (N-myristoyl glycine) is attached at Gly2. Residues Cys3 and Cys6 are each lipidated (S-palmitoyl cysteine). At Thr12 the chain carries Phosphothreonine; by PKC. Residues Thr15–Tyr39 are disordered. The 62-residue stretch at Thr82 to Ser143 folds into the SH3 domain. An SH2 domain is found at Trp149 to Ala246. One can recognise a Protein kinase domain in the interval Leu268 to Phe521. ATP-binding positions include Leu274–Val282 and Lys296. The active-site Proton acceptor is the Asp387. Tyr417 bears the Phosphotyrosine; by autocatalysis mark. A Phosphotyrosine modification is found at Tyr528.

It belongs to the protein kinase superfamily. Tyr protein kinase family. SRC subfamily. As to quaternary structure, associates through its SH3 domain, to the p85 subunit of phosphatidylinositol 3-kinase. Mn(2+) serves as cofactor. As to expression, thymus and spleen.

The protein resides in the cytoplasm. Its subcellular location is the nucleus. It is found in the cell membrane. It localises to the perikaryon. The enzyme catalyses L-tyrosyl-[protein] + ATP = O-phospho-L-tyrosyl-[protein] + ADP + H(+). With respect to regulation, inhibited by phosphorylation of Tyr-528 by leukocyte common antigen and activated by dephosphorylation of this site. Tyrosine-protein kinase implicated in the control of cell growth. Plays a role in the regulation of intracellular calcium levels. Required in brain development and mature brain function with important roles in the regulation of axon growth, axon guidance, and neurite extension. Role in CNTN1-mediated signaling. This Gallus gallus (Chicken) protein is Tyrosine-protein kinase Fyn (FYN).